Reading from the N-terminus, the 92-residue chain is Small ribosomal subunit protein uS19c (92 aa).

Belongs to the universal ribosomal protein uS19 family.

It is found in the plastid. Its subcellular location is the chloroplast. Protein S19 forms a complex with S13 that binds strongly to the 16S ribosomal RNA. The polypeptide is Small ribosomal subunit protein uS19c (Gossypium barbadense (Sea Island cotton)).